Reading from the N-terminus, the 329-residue chain is Lipoyl synthase (329 aa).

Positions 1 to 23 (MTDLTATPAPAEPAASAYDPTAK) are disordered. [4Fe-4S] cluster contacts are provided by C76, C81, C87, C102, C106, C109, and S316. The Radical SAM core domain occupies 87–305 (CFGKGTATFM…EEEAYKMGFT (219 aa)).

It belongs to the radical SAM superfamily. Lipoyl synthase family. It depends on [4Fe-4S] cluster as a cofactor.

It is found in the cytoplasm. The enzyme catalyses [[Fe-S] cluster scaffold protein carrying a second [4Fe-4S](2+) cluster] + N(6)-octanoyl-L-lysyl-[protein] + 2 oxidized [2Fe-2S]-[ferredoxin] + 2 S-adenosyl-L-methionine + 4 H(+) = [[Fe-S] cluster scaffold protein] + N(6)-[(R)-dihydrolipoyl]-L-lysyl-[protein] + 4 Fe(3+) + 2 hydrogen sulfide + 2 5'-deoxyadenosine + 2 L-methionine + 2 reduced [2Fe-2S]-[ferredoxin]. Its pathway is protein modification; protein lipoylation via endogenous pathway; protein N(6)-(lipoyl)lysine from octanoyl-[acyl-carrier-protein]: step 2/2. Catalyzes the radical-mediated insertion of two sulfur atoms into the C-6 and C-8 positions of the octanoyl moiety bound to the lipoyl domains of lipoate-dependent enzymes, thereby converting the octanoylated domains into lipoylated derivatives. The protein is Lipoyl synthase of Burkholderia pseudomallei (strain 1106a).